The primary structure comprises 439 residues: SH3 domain-containing protein 1 (439 aa).

The region spanning Asp32 to Ser263 is the BAR domain. Over residues Ser277–Ile291 the composition is skewed to polar residues. Residues Ser277–Leu362 form a disordered region. Over residues Ser318 to Asn358 the composition is skewed to basic and acidic residues. The SH3 domain maps to Asp366 to Lys425.

Interacts with the auxilin-like protein AUXI1. Highly expressed in flowers. Detected in seedlings, roots, leaves and stems.

It localises to the cytoplasmic vesicle. The protein resides in the clathrin-coated vesicle. Its subcellular location is the cell membrane. The protein localises to the golgi apparatus. It is found in the trans-Golgi network. It localises to the endoplasmic reticulum. Lipid binding protein bound strongly to phosphatidic acid, phosphatidylinositol-4-phosphate and phosphatidylinositol-4,5-bisphosphate. Binds actin in vitro. Involved in trafficking and modification of clathrin-coated vesicles. The chain is SH3 domain-containing protein 1 (SH3P1) from Arabidopsis thaliana (Mouse-ear cress).